We begin with the raw amino-acid sequence, 973 residues long: Sodium/calcium exchanger 1 (973 aa).

A signal peptide spans 1–35 (MYNMRRLSLSPTFSMGFHLLVTVSLLFSHVDHVIA). At 36-74 (ETEMEGEGNETGECTGSYYCKKGVILPIWEPQDPSFGDK) the chain is on the extracellular side. A glycan (N-linked (GlcNAc...) asparagine) is linked at Asn-44. Residues 75-95 (IARATVYFVAMVYMFLGVSII) form a helical membrane-spanning segment. Topologically, residues 96–136 (ADRFMSSIEVITSQEKEITIKKPNGETTKTTVRIWNETVSN) are cytoplasmic. A helical transmembrane segment spans residues 137 to 157 (LTLMALGSSAPEILLSVIEVC). The Alpha-1 repeat unit spans residues 141–181 (ALGSSAPEILLSVIEVCGHNFTAGDLGPSTIVGSAAFNMFI). At 158 to 170 (GHNFTAGDLGPST) the chain is on the extracellular side. N-linked (GlcNAc...) asparagine glycosylation is present at Asn-160. A helical transmembrane segment spans residues 171–191 (IVGSAAFNMFIIIALCVYVVP). The Cytoplasmic segment spans residues 192 to 204 (DGETRKIKHLRVF). Residues 205-225 (FVTAAWSIFAYTWLYIILSVI) traverse the membrane as a helical segment. At 226–231 (SPGVVE) the chain is on the extracellular side. Residues 232–252 (VWEGLLTFFFFPICVVFAWVA) form a helical membrane-spanning segment. The Cytoplasmic segment spans residues 253–800 (DRRLLFYKYV…FVPPTEYWNG (548 aa)). Residues 254–273 (RRLLFYKYVYKRYRAGKQRG) form a putative calmodulin-binding region region. Phosphoserine occurs at positions 285 and 392. Calx-beta domains lie at 396 to 496 (VNTE…VHLS) and 527 to 627 (ATVT…LEIG). Ca(2+) contacts are provided by Glu-420, Asp-456, Asp-481, Asp-482, Ile-484, Glu-486, Glu-489, Asp-533, Asp-534, Asp-535, Glu-551, Asp-587, Asp-613, Glu-614, Glu-615, and Glu-718. The chain crosses the membrane as a helical span at residues 801–821 (WACFIVSILMIGLLTAFIGDL). At 822 to 824 (ASH) the chain is on the extracellular side. Residues 825-845 (FGCTIGLKDSVTAVVFVALGT) traverse the membrane as a helical segment. One copy of the Alpha-2 repeat lies at 842 to 878 (ALGTSVPDTFASKVAATQDQYADASIGNVTGSNAVNV). Over 846 to 874 (SVPDTFASKVAATQDQYADASIGNVTGSN) the chain is Cytoplasmic. A helical membrane pass occupies residues 875–895 (AVNVFLGIGVAWSIAAIYHAA). Residues 896 to 906 (NGEQFKVSPGT) lie on the Extracellular side of the membrane. Residues 907–927 (LAFSVTLFTIFAFINVGVLLY) form a helical membrane-spanning segment. The Cytoplasmic portion of the chain corresponds to 928–944 (RRRPEIGGELGGPRTAK). A helical transmembrane segment spans residues 945 to 965 (LLTSCLFVLLWLLYIFFSSLE). At 966-973 (AYCHIKGF) the chain is on the extracellular side.

Belongs to the Ca(2+):cation antiporter (CaCA) (TC 2.A.19) family. SLC8 subfamily. Detected primarily in heart and at lower levels in brain. Expressed in cardiac sarcolemma, brain, kidney, liver, pancreas, skeletal muscle, placenta and lung.

It localises to the cell membrane. The enzyme catalyses Ca(2+)(in) + 3 Na(+)(out) = Ca(2+)(out) + 3 Na(+)(in). Its activity is regulated as follows. Activated by micromolar levels of Ca(2+). Mediates the exchange of one Ca(2+) ion against three to four Na(+) ions across the cell membrane, and thereby contributes to the regulation of cytoplasmic Ca(2+) levels and Ca(2+)-dependent cellular processes. Contributes to Ca(2+) transport during excitation-contraction coupling in muscle. In a first phase, voltage-gated channels mediate the rapid increase of cytoplasmic Ca(2+) levels due to release of Ca(2+) stores from the endoplasmic reticulum. SLC8A1 mediates the export of Ca(2+) from the cell during the next phase, so that cytoplasmic Ca(2+) levels rapidly return to baseline. Required for normal embryonic heart development and the onset of heart contractions. The sequence is that of Sodium/calcium exchanger 1 (SLC8A1) from Homo sapiens (Human).